A 465-amino-acid chain; its full sequence is Ribulose bisphosphate carboxylase large chain (465 aa).

Lys-4 is modified (N6,N6,N6-trimethyllysine). Substrate contacts are provided by Asn-113 and Thr-163. Lys-165 acts as the Proton acceptor in catalysis. Lys-167 lines the substrate pocket. Positions 191, 193, and 194 each coordinate Mg(2+). At Lys-191 the chain carries N6-carboxylysine. His-284 acts as the Proton acceptor in catalysis. Positions 285, 317, and 369 each coordinate substrate.

Belongs to the RuBisCO large chain family. Type I subfamily. In terms of assembly, heterohexadecamer of 8 large chains and 8 small chains; disulfide-linked. The disulfide link is formed within the large subunit homodimers. Mg(2+) is required as a cofactor. The disulfide bond which can form in the large chain dimeric partners within the hexadecamer appears to be associated with oxidative stress and protein turnover.

Its subcellular location is the plastid. It localises to the chloroplast. It carries out the reaction 2 (2R)-3-phosphoglycerate + 2 H(+) = D-ribulose 1,5-bisphosphate + CO2 + H2O. The enzyme catalyses D-ribulose 1,5-bisphosphate + O2 = 2-phosphoglycolate + (2R)-3-phosphoglycerate + 2 H(+). Its function is as follows. RuBisCO catalyzes two reactions: the carboxylation of D-ribulose 1,5-bisphosphate, the primary event in carbon dioxide fixation, as well as the oxidative fragmentation of the pentose substrate in the photorespiration process. Both reactions occur simultaneously and in competition at the same active site. The sequence is that of Ribulose bisphosphate carboxylase large chain from Senega cruciata (Cross-leaved milkwort).